The sequence spans 162 residues: Transcription elongation factor GreA (162 aa).

Residues 44–69 (SENAEYEAAREKQAFVEARIKHLEDI) are a coiled coil.

Belongs to the GreA/GreB family.

Functionally, necessary for efficient RNA polymerase transcription elongation past template-encoded arresting sites. The arresting sites in DNA have the property of trapping a certain fraction of elongating RNA polymerases that pass through, resulting in locked ternary complexes. Cleavage of the nascent transcript by cleavage factors such as GreA or GreB allows the resumption of elongation from the new 3'terminus. GreA releases sequences of 2 to 3 nucleotides. This is Transcription elongation factor GreA from Rickettsia bellii (strain RML369-C).